A 417-amino-acid polypeptide reads, in one-letter code: NADH-quinone oxidoreductase subunit D (417 aa).

This sequence belongs to the complex I 49 kDa subunit family. In terms of assembly, NDH-1 is composed of 14 different subunits. Subunits NuoB, C, D, E, F, and G constitute the peripheral sector of the complex.

It is found in the cell inner membrane. The catalysed reaction is a quinone + NADH + 5 H(+)(in) = a quinol + NAD(+) + 4 H(+)(out). Its function is as follows. NDH-1 shuttles electrons from NADH, via FMN and iron-sulfur (Fe-S) centers, to quinones in the respiratory chain. The immediate electron acceptor for the enzyme in this species is believed to be ubiquinone. Couples the redox reaction to proton translocation (for every two electrons transferred, four hydrogen ions are translocated across the cytoplasmic membrane), and thus conserves the redox energy in a proton gradient. The sequence is that of NADH-quinone oxidoreductase subunit D from Ralstonia pickettii (strain 12J).